The primary structure comprises 156 residues: Cyanate hydratase (156 aa).

Catalysis depends on residues Arg96, Glu99, and Ser122.

This sequence belongs to the cyanase family.

The catalysed reaction is cyanate + hydrogencarbonate + 3 H(+) = NH4(+) + 2 CO2. Catalyzes the reaction of cyanate with bicarbonate to produce ammonia and carbon dioxide. This Burkholderia thailandensis (strain ATCC 700388 / DSM 13276 / CCUG 48851 / CIP 106301 / E264) protein is Cyanate hydratase.